Consider the following 448-residue polypeptide: MRAVVVVTGLVVVVVATALSLPNHDVKSATSSRSSSDYQGSSGDDCDEGLPPPDQPFRVVWNHPDNCERIKLHLPLDDYGIIFNKLRVFLGEEIQTLYDTGPWPYISETGKFINGGLPQSFNHPDNDGETQRILKKHRPENFTGLGVLDFETWRAIYSTNFGPMTIYQNESVKLVKEQHPDYDQKKLTKVAEKEWQQAAKDIMSNKLKIAQEVMPRGHWGYYLYPRTWDNKRDTKFRNDKINWLWRQSTGLYPSIYIYDFSKTESAITKFVSDTVGEAVRVQKEFSPPNTPIYPYVMFQTMDNIFHYEDHLKISLGLSAKMGAAGVVLWGTSKHYKESTRQWQCQQLQEHIRTVLGPLVKNVTQMMTDCSRAICEGHGRCVHNSHDVILGETESQRLSDLCSTRQSRFRDYHCRCYSAWEGACCQTLRPSRCQKREQRNVHGGGDLID.

The signal sequence occupies residues 1-18; it reads MRAVVVVTGLVVVVVATA. Positions 19 to 33 are excised as a propeptide; the sequence is LSLPNHDVKSATSSR. The disordered stretch occupies residues 26 to 55; sequence VKSATSSRSSSDYQGSSGDDCDEGLPPPDQ. A compositionally biased stretch (low complexity) spans 31 to 43; the sequence is SSRSSSDYQGSSG. Cys67 and Cys344 are joined by a disulfide. Residue Asn141 is glycosylated (N-linked (GlcNAc...) asparagine). The Proton donor role is filled by Glu151. Asn169 and Asn361 each carry an N-linked (GlcNAc...) asparagine glycan. 3 disulfides stabilise this stretch: Cys369/Cys380, Cys374/Cys413, and Cys415/Cys424. The EGF-like domain maps to 413 to 424; that stretch reads CRCYSAWEGACC.

Belongs to the glycosyl hydrolase 56 family. Expressed by the venom duct.

Its subcellular location is the secreted. The enzyme catalyses Random hydrolysis of (1-&gt;4)-linkages between N-acetyl-beta-D-glucosamine and D-glucuronate residues in hyaluronate.. Functionally, hyaluronidase catalyzes the hydrolysis of hyaluronic acid (HA), an anionic, nonsulfated glycosaminoglycan distributed widely throughout connective, epithelial, and neural tissues. In venom, they are known to enhance diffusion of the venom by degrading the extracellular matrix. The sequence is that of Hyaluronidase conohyal-Cn1 from Conus consors (Singed cone).